The primary structure comprises 37 residues: Cytochrome b6-f complex subunit 5 (37 aa).

Residues 5–25 traverse the membrane as a helical segment; sequence LLFGIVLGLIPVTLVGLFVAA.

This sequence belongs to the PetG family. The 4 large subunits of the cytochrome b6-f complex are cytochrome b6, subunit IV (17 kDa polypeptide, PetD), cytochrome f and the Rieske protein, while the 4 small subunits are PetG, PetL, PetM and PetN. The complex functions as a dimer.

It is found in the plastid. The protein localises to the chloroplast thylakoid membrane. Its function is as follows. Component of the cytochrome b6-f complex, which mediates electron transfer between photosystem II (PSII) and photosystem I (PSI), cyclic electron flow around PSI, and state transitions. PetG is required for either the stability or assembly of the cytochrome b6-f complex. The polypeptide is Cytochrome b6-f complex subunit 5 (Rhodomonas salina (Cryptomonas salina)).